Consider the following 313-residue polypeptide: Protoheme IX farnesyltransferase (313 aa).

8 consecutive transmembrane segments (helical) span residues 34–54 (VIEL…RGTV), 56–76 (PLLI…ANTL), 105–125 (HALI…WWTT), 128–148 (LSAH…TLVL), 152–172 (TSQN…IGWS), 173–193 (AVTG…FFWT), 243–263 (LALA…TWFL), and 291–311 (YLAV…PTLF).

Belongs to the UbiA prenyltransferase family. Protoheme IX farnesyltransferase subfamily.

It is found in the cell membrane. The enzyme catalyses heme b + (2E,6E)-farnesyl diphosphate + H2O = Fe(II)-heme o + diphosphate. It participates in porphyrin-containing compound metabolism; heme O biosynthesis; heme O from protoheme: step 1/1. Functionally, converts heme B (protoheme IX) to heme O by substitution of the vinyl group on carbon 2 of heme B porphyrin ring with a hydroxyethyl farnesyl side group. In Mycolicibacterium vanbaalenii (strain DSM 7251 / JCM 13017 / BCRC 16820 / KCTC 9966 / NRRL B-24157 / PYR-1) (Mycobacterium vanbaalenii), this protein is Protoheme IX farnesyltransferase.